Here is a 102-residue protein sequence, read N- to C-terminus: Large ribosomal subunit protein bL21 (102 aa).

The protein belongs to the bacterial ribosomal protein bL21 family. In terms of assembly, part of the 50S ribosomal subunit. Contacts protein L20.

This protein binds to 23S rRNA in the presence of protein L20. In Neisseria meningitidis serogroup A / serotype 4A (strain DSM 15465 / Z2491), this protein is Large ribosomal subunit protein bL21.